The chain runs to 122 residues: Large ribosomal subunit protein bL12 (122 aa).

Belongs to the bacterial ribosomal protein bL12 family. In terms of assembly, homodimer. Part of the ribosomal stalk of the 50S ribosomal subunit. Forms a multimeric L10(L12)X complex, where L10 forms an elongated spine to which 2 to 4 L12 dimers bind in a sequential fashion. Binds GTP-bound translation factors.

Functionally, forms part of the ribosomal stalk which helps the ribosome interact with GTP-bound translation factors. Is thus essential for accurate translation. The polypeptide is Large ribosomal subunit protein bL12 (Mycoplasma genitalium (strain ATCC 33530 / DSM 19775 / NCTC 10195 / G37) (Mycoplasmoides genitalium)).